The following is a 119-amino-acid chain: MICOS complex subunit MIC13 (119 aa).

Residues 1–7 are Mitochondrial matrix-facing; that stretch reads MVARVWS. A helical membrane pass occupies residues 8–26; it reads LMRFLIKGSVAGGAVYLVY. The Mitochondrial intermembrane portion of the chain corresponds to 27–119; that stretch reads DQELLGPSDK…GWEYLKEHSK (93 aa).

It belongs to the MICOS complex subunit Mic13 family. In terms of assembly, component of the mitochondrial contact site and cristae organizing system (MICOS) complex, composed of at least MICOS10/MIC10, CHCHD3/MIC19, CHCHD6/MIC25, APOO/MIC26, MICOS13/MIC13, APOOL/MIC27 and IMMT/MIC60. The MICOS complex associates with mitochondrial outer membrane proteins SAMM50, MTX1 and MTX2 (together described as components of the mitochondrial outer membrane sorting assembly machinery (SAM) complex) and DNAJC11, mitochondrial inner membrane protein TMEM11 and with HSPA9. The MICOS and SAM complexes together with DNAJC11 are part of a large protein complex spanning both membranes termed the mitochondrial intermembrane space bridging (MIB) complex.

It is found in the mitochondrion inner membrane. Functionally, component of the MICOS complex, a large protein complex of the mitochondrial inner membrane that plays crucial roles in the maintenance of crista junctions, inner membrane architecture, and formation of contact sites to the outer membrane. Constituent of mature MICOS complex, it is required for the formation of cristae junction (CJ) and maintenance of cristae morphology. Required for the incorporation of MICOS10/MIC10 into the MICOS complex. The sequence is that of MICOS complex subunit MIC13 (Micos13) from Mus musculus (Mouse).